We begin with the raw amino-acid sequence, 509 residues long: Maturase K (509 aa).

It belongs to the intron maturase 2 family. MatK subfamily.

The protein resides in the plastid. The protein localises to the chloroplast. Functionally, usually encoded in the trnK tRNA gene intron. Probably assists in splicing its own and other chloroplast group II introns. This chain is Maturase K, found in Nicotiana plumbaginifolia (Leadwort-leaved tobacco).